We begin with the raw amino-acid sequence, 780 residues long: MATSNLLKNKGSLQFEDKWDFMRPIVLKLLRQESVTKQQWFDLFSDVHAVCLWDDKGPAKIHQALKEDILEFIKQAQARVLSHQDDTALLKAYIVEWRKFFTQCDILPKPFCQLEITLMGKQGSNKKSNVEDSIVRKLMLDTWNESIFSNIKNRLQDSAMKLVHAERLGEAFDSQLVIGVRESYVNLCSNPEDKLQIYRDNFEKAYLDSTERFYRTQAPSYLQQNGVQNYMKYADAKLKEEEKRALRYLETRRECNSVEALMECCVNALVTSFKETILAECQGMIKRNETEKLHLMFSLMDKVPNGIEPMLKDLEEHIISAGLADMVAAAETITTDSEKYVEQLLTLFNRFSKLVKEAFQDDPRFLTARDKAYKAVVNDATIFKLELPLKQKGVGLKTQPESKCPELLANYCDMLLRKTPLSKKLTSEEIEAKLKEVLLVLKYVQNKDVFMRYHKAHLTRRLILDISADSEIEENMVEWLREVGMPADYVNKLARMFQDIKVSEDLNQAFKEMHKNNKLALPADSVNIKILNAGAWSRSSEKVFVSLPTELEDLIPEVEEFYKKNHSGRKLHWHHLMSNGIITFKNEVGQYDLEVTTFQLAVLFAWNQRPREKISFENLKLATELPDAELRRTLWSLVAFPKLKRQVLLYEPQVNSPKDFTEGTLFSVNQEFSLIKNAKVQKRGKINLIGRLQLTTERMREEENEGIVQLRILRTRKLYIQIMKMRKKISNAQLQTELVEILKNMFLPQKKMIKEQIEWLIEHKYIRRDESDINTFIYMA.

Phosphoserine is present on Ser-34. A Phosphothreonine modification is found at Thr-210. The Cullin neddylation domain maps to 713–772 (LRTRKLYIQIMKMRKKISNAQLQTELVEILKNMFLPQKKMIKEQIEWLIEHKYIRRDESD). Lys-724 participates in a covalent cross-link: Glycyl lysine isopeptide (Lys-Gly) (interchain with G-Cter in NEDD8).

It belongs to the cullin family. As to quaternary structure, component of multiple cullin-5-RING E3 ubiquitin-protein ligase complexes (ECS complexes, also named CRL5 complexes) formed of CUL5, Elongin BC (ELOB and ELOC), RNF7/RBX2 and a variable SOCS box domain-containing protein as substrate-specific recognition component. CUL5-containing ECS complexes specifically contain RNF7/RBX2, and not RBX1, as catalytic subunit. Component of the ECS(ASB2) complex with the substrate recognition component ASB2. Component of the ECS(ASB6) complex with the substrate recognition component ASB6. Component of the ECS(ASB7) complex with the substrate recognition component ASB7. Component of the ECS(ASB9) complex with the substrate recognition component ASB9. Component of the ECS(ASB11) complex with the substrate recognition component ASB11. Component of the ECS(ASB12) complex with the substrate recognition component ASB12. Component of the ECS(LRRC41) complex with the substrate recognition component LRRC41. Component of the ECS(SOCS1) complex with the substrate recognition component SOCS1. Component of the ECS(SOCS2) complex with the substrate recognition component SOCS2. Component of the ECS(WSB1) complex with the substrate recognition subunit WSB1. Component of the ECS(SOCS3) complex with the substrate recognition component SOCS3. Component of the ECS(SOCS7) complex with the substrate recognition component SOCS7. Component of the ECS(SPSB1) complex with the substrate recognition component SPSB1. Component of the ECS(SPSB3) complex with the substrate recognition component SPSB3. Component of the ECS(SPSB2) complex with the substrate recognition component SPSB2. Component of the ECS(SPSB4) complex with the substrate recognition component SPSB4. Component of the ECS(RAB40) complex with the substrate recognition subunit RAB40A, RAB40B or RAB40C. Component of the ECS(KLHDC1) complex with the substrate recognition component KLHDC1. Component of the ECS(PCMTD1) complex with the substrate recognition subunit PCMTD1. May also form complexes containing RBX1 and ELOA or VHL; additional evidence is however required to confirm this result in vivo. Interacts (when neddylated) with ARIH2; leading to activate the E3 ligase activity of ARIH2. Interacts with ERCC6; the interaction is induced by DNA damaging agents or inhibitors of RNA polymerase II elongation. Interacts with ELOA (via the BC-box). Interacts (unneddylated form) with DCUN1D1, DCUN1D2, DCUN1D3, DCUN1D4 and DCUN1D5; these interactions promote the cullin neddylation. Post-translationally, neddylated; which enhances the ubiquitination activity of ECS complexes and prevents binding of the inhibitor CAND1. Deneddylated via its interaction with the COP9 signalosome (CSN). In terms of tissue distribution, kidney collecting tubules.

The protein localises to the nucleus. The protein operates within protein modification; protein ubiquitination. Its function is as follows. Core component of multiple cullin-5-RING E3 ubiquitin-protein ligase complexes (ECS complexes, also named CRL5 complexes), which mediate the ubiquitination and subsequent proteasomal degradation of target proteins. Acts a scaffold protein that contributes to catalysis through positioning of the substrate and the ubiquitin-conjugating enzyme. The functional specificity of the E3 ubiquitin-protein ligase complex depends on the variable SOCS box-containing substrate recognition component. Acts as a key regulator of neuron positioning during cortex development: component of various SOCS-containing ECS complexes, such as the ECS(SOCS7) complex, that regulate reelin signaling by mediating ubiquitination and degradation of DAB1. ECS(SOCS1) seems to direct ubiquitination of JAK2. The ECS(SOCS2) complex mediates the ubiquitination and subsequent proteasomal degradation of phosphorylated EPOR and GHR. The ECS(SPSB3) complex catalyzes ubiquitination of nuclear CGAS. ECS(KLHDC1) complex is part of the DesCEND (destruction via C-end degrons) pathway and mediates ubiquitination and degradation of truncated SELENOS selenoprotein produced by failed UGA/Sec decoding, which ends with a glycine. The ECS(ASB9) complex mediates ubiquitination and degradation of CKB. As part of some ECS complex, promotes 'Lys-11'-linked ubiquitination and degradation of BTRC. As part of a multisubunit ECS complex, polyubiquitinates monoubiquitinated POLR2A. As part of the ECS(RAB40C) complex, mediates ANKRD28 ubiquitination and degradation, thereby regulating protein phosphatase 6 (PP6) complex activity and focal adhesion assembly during cell migration. As part of the ECS(RAB40A) complex, mediates RHOU 'Lys-48'-linked ubiquitination and degradation, thus inhibiting focal adhesion disassembly during cell migration. As part of the ECS(RAB40B) complex, mediates LIMA1/EPLIN and RAP2 ubiquitination, thereby regulating actin cytoskeleton dynamics and stress fiber formation during cell migration. May form a cell surface vasopressin receptor. The protein is Cullin-5 (CUL5) of Oryctolagus cuniculus (Rabbit).